Here is a 207-residue protein sequence, read N- to C-terminus: dTTP/UTP pyrophosphatase (207 aa).

Asp87 functions as the Proton acceptor in the catalytic mechanism.

The protein belongs to the Maf family. YhdE subfamily. It depends on a divalent metal cation as a cofactor.

It localises to the cytoplasm. It carries out the reaction dTTP + H2O = dTMP + diphosphate + H(+). The enzyme catalyses UTP + H2O = UMP + diphosphate + H(+). Its function is as follows. Nucleoside triphosphate pyrophosphatase that hydrolyzes dTTP and UTP. May have a dual role in cell division arrest and in preventing the incorporation of modified nucleotides into cellular nucleic acids. This Ralstonia nicotianae (strain ATCC BAA-1114 / GMI1000) (Ralstonia solanacearum) protein is dTTP/UTP pyrophosphatase.